The chain runs to 750 residues: DDT domain-containing protein DDR4 (750 aa).

Residues 1-125 (MGSSSDIVPD…ITSLVPPPEP (125 aa)) are disordered. The span at 45–54 (RAQQRLQELQ) shows a compositional bias: low complexity. Over residues 55–77 (AAERKLKPPKKEYKREQHRRREE) the composition is skewed to basic and acidic residues. Positions 78–100 (VVEEDEDSEDDDQEDEENDGDDE) are enriched in acidic residues. Residues 133-192 (LRSMWELASVLNFLHVFRPLLKINAEFSAEEFETALLTPNDTLSDIHIPLLKAIPPVTRM) enclose the DDT domain. 2 disordered regions span residues 450-505 (NGRS…TDFV) and 532-750 (LKKR…TDNS). The span at 451 to 471 (GRSTSSTHPTEPVNDTASGRS) shows a compositional bias: polar residues. The segment covering 545 to 585 (EGDEEKGDEEYKWDEDNAEYEEEEEEEEEEDSLSASEEDSD) has biased composition (acidic residues). The span at 595–606 (RRETKLRSRSND) shows a compositional bias: basic and acidic residues. Residues 688-707 (NADTTNGKENNQLNKSNGTT) are compositionally biased toward polar residues. Basic and acidic residues predominate over residues 741 to 750 (LKDDDKTDNS).

In terms of assembly, interacts (via the DDT domain) with CHR11 (via C-terminus).

The protein resides in the nucleus. Its function is as follows. Probable transcription regulator. The polypeptide is DDT domain-containing protein DDR4 (Arabidopsis thaliana (Mouse-ear cress)).